Consider the following 216-residue polypeptide: Flavin-dependent thymidylate synthase (216 aa).

The ThyX domain occupies 9-206; that stretch reads GFVELVDVMG…PWTYEAFIKY (198 aa). FAD is bound by residues Ser-55, 78 to 80, and Glu-86; that span reads RHR. DUMP contacts are provided by residues 75 to 78, 86 to 90, and Arg-145; these read QWFR and ELSGR. Positions 78 to 88 match the ThyX motif motif; sequence RHRIASYNELS. Residues 161 to 163 and Asn-167 contribute to the FAD site; that span reads NAR. Position 172 (Arg-172) interacts with dUMP. Arg-172 (involved in ionization of N3 of dUMP, leading to its activation) is an active-site residue.

Belongs to the thymidylate synthase ThyX family. As to quaternary structure, homotetramer. FAD serves as cofactor.

It catalyses the reaction dUMP + (6R)-5,10-methylene-5,6,7,8-tetrahydrofolate + NADPH + H(+) = dTMP + (6S)-5,6,7,8-tetrahydrofolate + NADP(+). Its pathway is pyrimidine metabolism; dTTP biosynthesis. Catalyzes the reductive methylation of 2'-deoxyuridine-5'-monophosphate (dUMP) to 2'-deoxythymidine-5'-monophosphate (dTMP) while utilizing 5,10-methylenetetrahydrofolate (mTHF) as the methyl donor, and NADPH and FADH(2) as the reductant. In Thermotoga neapolitana (strain ATCC 49049 / DSM 4359 / NBRC 107923 / NS-E), this protein is Flavin-dependent thymidylate synthase.